The sequence spans 1264 residues: Phosphatidylinositol 3,4,5-trisphosphate 5-phosphatase 2 (1264 aa).

The region spanning 26-122 is the SH2 domain; sequence WYHRDLSRAA…GLVCALLLPV (97 aa). Over residues 124–137 the composition is skewed to basic and acidic residues; that stretch reads REREPDPPDDRDVS. The disordered stretch occupies residues 124 to 182; that stretch reads REREPDPPDDRDVSDGEDEKPPLPPRSGSTSISAPVGPGSPPAAPETPTTPAAESAPNG. Serine 137 carries the post-translational modification Phosphoserine. The span at 169-180 shows a compositional bias: low complexity; it reads ETPTTPAAESAP. Threonine 170 is subject to Phosphothreonine. Residues serine 246 and serine 358 each carry the phosphoserine modification. Position 892 is a phosphotyrosine (tyrosine 892). The residue at position 896 (serine 896) is a Phosphoserine. The disordered stretch occupies residues 903-1123; sequence GAKSKAPSVS…TFLGEVASGD (221 aa). Residues 944–954 are compositionally biased toward pro residues; it reads PPPTGRPPAPP. Residues 950–955 carry the SH3-binding motif; sequence PPAPPR. Residues 957–971 are compositionally biased toward basic and acidic residues; sequence ASREEPLTPRLKAEG. Threonine 964 is subject to Phosphothreonine. Positions 989-992 match the NPXY motif motif; sequence NPAY. A Phosphotyrosine modification is found at tyrosine 992. Pro residues-rich tracts occupy residues 1002-1017, 1054-1065, and 1093-1110; these read LLPP…PVPP, LPPPDFPPPPLP, and GPPP…PGPS. A Phosphoserine modification is found at serine 1137. The disordered stretch occupies residues 1140–1178; the sequence is DYAPAGPGRSVLLPGPLELQPPRGLPSDYGRPLSFPPPR. Tyrosine 1141 and tyrosine 1168 each carry phosphotyrosine. The region spanning 1210-1264 is the SAM domain; the sequence is WLRAIGLERYEEGLVHNGWDDLEFLSDITEEDLEEAGVQDPAHKRLLLDTLQLSK. At serine 1263 the chain carries Phosphoserine.

Belongs to the inositol 1,4,5-trisphosphate 5-phosphatase family. Interacts with tyrosine phosphorylated form of SHC1. Interacts with EGFR. Upon stimulation by the EGF signaling pathway, it forms a complex with SHC1 and EGFR. Interacts with cytoskeletal protein SORBS3/vinexin, promoting its localization to the periphery of cells. Forms a complex with filamin (FLNA or FLNB), actin, GPIb (GP1BA or GP1BB) that regulates cortical and submembraneous actin. Interacts with c-Met/MET, when c-Met/MET is phosphorylated on 'Tyr-1356'. Interacts with p130Cas/BCAR1. Interacts with CENTD3/ARAP3 via its SAM domain. Interacts with c-Cbl/CBL and CAP/SORBS1. Interacts with activated EPHA2 receptor. Interacts with receptor FCGR2A. Interacts with receptor FCGR2B. Interacts with tyrosine kinase ABL1. Interacts with tyrosine kinase TEC. Interacts with CSF1R. Interacts (via N-terminus) with SH3YL1 (via SH3 domain). Interacts with FCRL6 (tyrosine phosphorylated form). Interacts (via SH2 domain) with tyrosine phosphorylated KLRC1 (via ITIM). Interacts with NEDD9/HEF1. Tyrosine phosphorylated by the members of the SRC family after exposure to a diverse array of extracellular stimuli such as insulin, growth factors such as EGF or PDGF, chemokines, integrin ligands and hypertonic and oxidative stress. May be phosphorylated upon IgG receptor FCGR2B-binding. Phosphorylated at Tyr-992 following cell attachment and spreading. Phosphorylated at Tyr-1168 following EGF signaling pathway stimulation. Phosphorylated at Thr-964 in response to PDGF.

It is found in the cytoplasm. The protein resides in the cytosol. It localises to the membrane. Its subcellular location is the cell projection. The protein localises to the filopodium. It is found in the lamellipodium. The protein resides in the basal cell membrane. It localises to the nucleus. Its subcellular location is the nucleus speckle. The protein localises to the cytoskeleton. It is found in the spindle pole. It carries out the reaction a 1,2-diacyl-sn-glycero-3-phospho-(1D-myo-inositol-3,4,5-trisphosphate) + H2O = a 1,2-diacyl-sn-glycero-3-phospho-(1D-myo-inositol-3,4-bisphosphate) + phosphate. The catalysed reaction is 1,2-dioctanoyl-sn-glycero-3-phospho-(1D-myo-inositol-3,4,5-trisphosphate) + H2O = 1,2-dioctanoyl-sn-glycero-3-phospho-(1D-myo-inositol-3,4-bisphosphate) + phosphate. It catalyses the reaction 1,2-dihexadecanoyl-sn-glycero-3-phospho-(1D-myo-inositol-3,4,5-trisphosphate) + H2O = 1,2-dihexadecanoyl-sn-glycero-3-phospho-(1D-myo-inositol-3,4-bisphosphate) + phosphate. With respect to regulation, activated upon translocation to the sites of synthesis of PtdIns(3,4,5)P3 in the membrane. Enzymatic activity is enhanced in the presence of phosphatidylserine. Its function is as follows. Phosphatidylinositol (PtdIns) phosphatase that specifically hydrolyzes the 5-phosphate of phosphatidylinositol-3,4,5-trisphosphate (PtdIns(3,4,5)P3) to produce PtdIns(3,4)P2, thereby negatively regulating the PI3K (phosphoinositide 3-kinase) pathways. Required for correct mitotic spindle orientation and therefore progression of mitosis. Plays a central role in regulation of PI3K-dependent insulin signaling, although the precise molecular mechanisms and signaling pathways remain unclear. While overexpression reduces both insulin-stimulated MAP kinase and Akt activation, its absence does not affect insulin signaling or GLUT4 trafficking. Confers resistance to dietary obesity. May act by regulating AKT2, but not AKT1, phosphorylation at the plasma membrane. Part of a signaling pathway that regulates actin cytoskeleton remodeling. Required for the maintenance and dynamic remodeling of actin structures as well as in endocytosis, having a major impact on ligand-induced EGFR internalization and degradation. Participates in regulation of cortical and submembraneous actin by hydrolyzing PtdIns(3,4,5)P3 thereby regulating membrane ruffling. Regulates cell adhesion and cell spreading. Required for HGF-mediated lamellipodium formation, cell scattering and spreading. Acts as a negative regulator of EPHA2 receptor endocytosis by inhibiting via PI3K-dependent Rac1 activation. Acts as a regulator of neuritogenesis by regulating PtdIns(3,4,5)P3 level and is required to form an initial protrusive pattern, and later, maintain proper neurite outgrowth. Acts as a negative regulator of the FC-gamma-RIIA receptor (FCGR2A). Mediates signaling from the FC-gamma-RIIB receptor (FCGR2B), playing a central role in terminating signal transduction from activating immune/hematopoietic cell receptor systems. Involved in EGF signaling pathway. Upon stimulation by EGF, it is recruited by EGFR and dephosphorylates PtdIns(3,4,5)P3. Plays a negative role in regulating the PI3K-PKB pathway, possibly by inhibiting PKB activity. Down-regulates Fc-gamma-R-mediated phagocytosis in macrophages independently of INPP5D/SHIP1. In macrophages, down-regulates NF-kappa-B-dependent gene transcription by regulating macrophage colony-stimulating factor (M-CSF)-induced signaling. Plays a role in the localization of AURKA and NEDD9/HEF1 to the basolateral membrane at interphase in polarized cysts, thereby mediates cell cycle homeostasis, cell polarization and cilia assembly. Additionally promotion of cilia growth is also facilitated by hydrolysis of (PtdIns(3,4,5)P3) to PtdIns(3,4)P2. Promotes formation of apical membrane-initiation sites during the initial stages of lumen formation via Rho family-induced actin filament organization and CTNNB1 localization to cell-cell contacts. May also hydrolyze PtdIns(1,3,4,5)P4, and could thus affect the levels of the higher inositol polyphosphates like InsP6. Involved in endochondral ossification. The polypeptide is Phosphatidylinositol 3,4,5-trisphosphate 5-phosphatase 2 (Canis lupus familiaris (Dog)).